The sequence spans 129 residues: ATP synthase epsilon chain (129 aa).

This sequence belongs to the ATPase epsilon chain family. In terms of assembly, F-type ATPases have 2 components, CF(1) - the catalytic core - and CF(0) - the membrane proton channel. CF(1) has five subunits: alpha(3), beta(3), gamma(1), delta(1), epsilon(1). CF(0) has three main subunits: a, b and c.

The protein resides in the cell inner membrane. In terms of biological role, produces ATP from ADP in the presence of a proton gradient across the membrane. The protein is ATP synthase epsilon chain of Nitratiruptor sp. (strain SB155-2).